The primary structure comprises 504 residues: Plasma protease C1 inhibitor (504 aa).

Residues 1-22 (MASKLTPLTLLLLLLAGDRAFS) form the signal peptide. The disordered stretch occupies residues 23–75 (DSEVTSHSSQDPLVVQEGSRDSVPERDGSRSPIEHTGQSSTWPTTSGSTKISN). Residues 24-33 (SEVTSHSSQD) are compositionally biased toward polar residues. Positions 40-55 (GSRDSVPERDGSRSPI) are enriched in basic and acidic residues. Polar residues predominate over residues 58–75 (TGQSSTWPTTSGSTKISN). Residues Asn75, Asn83, Asn107, Asn243, and Asn356 are each glycosylated (N-linked (GlcNAc...) asparagine). The disordered stretch occupies residues 94 to 132 (AQLPEDSPSQSPVNSSSPPSTASAPPTQAPTEPLCPEPL). Over residues 100-125 (SPSQSPVNSSSPPSTASAPPTQAPTE) the composition is skewed to low complexity.

This sequence belongs to the serpin family. Interacts with MASP1.

The protein resides in the secreted. Functionally, serine protease inhibitor, which acrs as a regulator of the classical complement pathway. Forms a proteolytically inactive stoichiometric complex with the C1r or C1s proteases. May also regulate blood coagulation, fibrinolysis and the generation of kinins. Very efficient inhibitor of FXIIa. Inhibits chymotrypsin and kallikrein. The sequence is that of Plasma protease C1 inhibitor (Serping1) from Rattus norvegicus (Rat).